Consider the following 330-residue polypeptide: GTPase Obg (330 aa).

Residues 1–159 (MHFIDEVKIY…MWIHLRLKLL (159 aa)) enclose the Obg domain. Residues 160 to 327 (SDVGLVGLPN…IVKLALEIIK (168 aa)) enclose the OBG-type G domain. GTP-binding positions include 166–173 (GLPNAGKS), 191–195 (FTTLV), 212–215 (DIPG), 279–282 (NKCD), and 308–310 (STY). Mg(2+) contacts are provided by Ser-173 and Thr-193.

It belongs to the TRAFAC class OBG-HflX-like GTPase superfamily. OBG GTPase family. Monomer. It depends on Mg(2+) as a cofactor.

Its subcellular location is the cytoplasm. An essential GTPase which binds GTP, GDP and possibly (p)ppGpp with moderate affinity, with high nucleotide exchange rates and a fairly low GTP hydrolysis rate. Plays a role in control of the cell cycle, stress response, ribosome biogenesis and in those bacteria that undergo differentiation, in morphogenesis control. The polypeptide is GTPase Obg (Rickettsia typhi (strain ATCC VR-144 / Wilmington)).